The following is a 347-amino-acid chain: Eukaryotic translation initiation factor 3 subunit I (347 aa).

WD repeat units lie at residues 8-49, 51-89, 149-190, 194-233, and 291-330; these read GHER…GTLD, HMGSIWSIDSDHTSLYCVTGSADYTIKVWTLMNGQCVQT, THEG…KLVE, VHKDSVSDLQFSPDRTYFITCSRDSNAHIIDIETFKVLKT, and GHFGPLNSIAVSPQGTSYTSGGEEGLVRLHHFEKSYFDFK.

Belongs to the eIF-3 subunit I family. As to quaternary structure, component of the eukaryotic translation initiation factor 3 (eIF-3) complex.

The protein resides in the cytoplasm. Its function is as follows. Component of the eukaryotic translation initiation factor 3 (eIF-3) complex, which is involved in protein synthesis of a specialized repertoire of mRNAs and, together with other initiation factors, stimulates binding of mRNA and methionyl-tRNAi to the 40S ribosome. The eIF-3 complex specifically targets and initiates translation of a subset of mRNAs involved in cell proliferation. The protein is Eukaryotic translation initiation factor 3 subunit I of Candida glabrata (strain ATCC 2001 / BCRC 20586 / JCM 3761 / NBRC 0622 / NRRL Y-65 / CBS 138) (Yeast).